A 76-amino-acid polypeptide reads, in one-letter code: Exodeoxyribonuclease 7 small subunit (76 aa).

It belongs to the XseB family. In terms of assembly, heterooligomer composed of large and small subunits.

It localises to the cytoplasm. It carries out the reaction Exonucleolytic cleavage in either 5'- to 3'- or 3'- to 5'-direction to yield nucleoside 5'-phosphates.. Its function is as follows. Bidirectionally degrades single-stranded DNA into large acid-insoluble oligonucleotides, which are then degraded further into small acid-soluble oligonucleotides. This Geotalea uraniireducens (strain Rf4) (Geobacter uraniireducens) protein is Exodeoxyribonuclease 7 small subunit.